Reading from the N-terminus, the 799-residue chain is RasGAP-activating-like protein 1 (799 aa).

C2 domains follow at residues 1–105 (MAKS…DSWI) and 116–231 (VQGE…NGWF). Ca(2+) contacts are provided by aspartate 21, aspartate 27, aspartate 74, aspartate 76, aspartate 82, aspartate 149, aspartate 155, aspartate 202, aspartate 204, and aspartate 210. In terms of domain architecture, Ras-GAP spans 316 to 544 (GLAGPFLDYL…SRVRDFLDQL (229 aa)). Threonine 400 carries the phosphothreonine modification. In terms of domain architecture, PH spans 565–672 (TIVREGFLLK…WLSALRKASA (108 aa)). A Btk-type zinc finger spans residues 674–710 (NPGKLVACHPGAFRSGRWTCCLQAERSAAGCSRTHSA). Zn(2+) is bound by residues histidine 682, cysteine 693, cysteine 694, and cysteine 704.

Requires Ca(2+) as cofactor.

Functionally, probable inhibitory regulator of the Ras-cyclic AMP pathway. Plays a role in dendrite formation by melanocytes. The polypeptide is RasGAP-activating-like protein 1 (Mus musculus (Mouse)).